The sequence spans 241 residues: Leucyl/phenylalanyl-tRNA--protein transferase (241 aa).

It belongs to the L/F-transferase family.

The protein localises to the cytoplasm. It carries out the reaction N-terminal L-lysyl-[protein] + L-leucyl-tRNA(Leu) = N-terminal L-leucyl-L-lysyl-[protein] + tRNA(Leu) + H(+). The enzyme catalyses N-terminal L-arginyl-[protein] + L-leucyl-tRNA(Leu) = N-terminal L-leucyl-L-arginyl-[protein] + tRNA(Leu) + H(+). The catalysed reaction is L-phenylalanyl-tRNA(Phe) + an N-terminal L-alpha-aminoacyl-[protein] = an N-terminal L-phenylalanyl-L-alpha-aminoacyl-[protein] + tRNA(Phe). Functionally, functions in the N-end rule pathway of protein degradation where it conjugates Leu, Phe and, less efficiently, Met from aminoacyl-tRNAs to the N-termini of proteins containing an N-terminal arginine or lysine. The sequence is that of Leucyl/phenylalanyl-tRNA--protein transferase from Neisseria meningitidis serogroup A / serotype 4A (strain DSM 15465 / Z2491).